We begin with the raw amino-acid sequence, 204 residues long: Somatotropin (204 aa).

The first 17 residues, 1 to 17 (MNSVVLQLSVVCLGVSS), serve as a signal peptide directing secretion. Pyrrolidone carboxylic acid is present on Gln18. His36 contacts Zn(2+). Cys69 and Cys177 are joined by a disulfide. Glu186 lines the Zn(2+) pocket. A disulfide bridge connects residues Cys194 and Cys202.

The protein belongs to the somatotropin/prolactin family.

The protein localises to the secreted. Growth hormone plays an important role in growth control and involved in the regulation of several anabolic processes. The sequence is that of Somatotropin (gh) from Oreochromis mossambicus (Mozambique tilapia).